A 557-amino-acid chain; its full sequence is Formate--tetrahydrofolate ligase 2 (557 aa).

66–73 (TPAGEGKT) contacts ATP.

This sequence belongs to the formate--tetrahydrofolate ligase family.

The enzyme catalyses (6S)-5,6,7,8-tetrahydrofolate + formate + ATP = (6R)-10-formyltetrahydrofolate + ADP + phosphate. The protein operates within one-carbon metabolism; tetrahydrofolate interconversion. This is Formate--tetrahydrofolate ligase 2 from Streptococcus pyogenes serotype M3 (strain ATCC BAA-595 / MGAS315).